Here is a 384-residue protein sequence, read N- to C-terminus: Putative F-box/kelch-repeat protein At3g27910 (384 aa).

Residues 27–79 (SPTSLPLPDEIIVNCFAYIPRCDYPSLSLVSKTFNRLITSIELNIVRSLFQRT) enclose the F-box domain. Kelch repeat units follow at residues 138–184 (KIYV…IVDG), 185–235 (KIYV…VMNK), 237–274 (IYIM…VIDN), and 275–323 (MLYT…MANH).

This is Putative F-box/kelch-repeat protein At3g27910 from Arabidopsis thaliana (Mouse-ear cress).